A 2119-amino-acid chain; its full sequence is Outer kinetochore KNL1 complex subunit KNL1 (2119 aa).

Residues 1 to 59 (MDGVYSEANEENDNTQRPVRRQHSSILKPPRSPLQDLKCGNQTNQEPNPPRKRKSSRRV) are disordered. Residues 1–202 (MDGVYSEANE…SDNFIKRLKT (202 aa)) are may mediate oligomerization. 2 interaction with microtubules regions span residues 17–34 (RPVRRQHSSILKPPRSPL) and 53–80 (RKSSRRVSFADTIKVFQTESHMKTERNS). The interaction with PP1CA; contains the protein phosphatase 1 (PP1) interaction motifs SILK, RVXF and phi-phi stretch occupies residues 23–80 (HSSILKPPRSPLQDLKCGNQTNQEPNPPRKRKSSRRVSFADTIKVFQTESHMKTERNS). 3 positions are modified to phosphoserine: S24, S32, and S60. The interval 124–140 (ENQMDLTASHTVMITKG) is interaction with BUB1. Residues 160–179 (ENLKHHAANSRIKKDLACST) form an interaction with BUB1B region. At S538 the chain carries Phosphoserine. A phosphothreonine mark is found at T540 and T739. Repeat 1 spans residues 723–827 (DKTILFSEGN…MTKSHTVFID (105 aa)). The 2 X 104 AA approximate repeats stretch occupies residues 723-1027 (DKTILFSEGN…VTRSHTVFID (305 aa)). Phosphoserine occurs at positions 794 and 878. Copy 2 of the repeat occupies 923 to 1027 (KSITFPENDK…VTRSHTVFID (105 aa)). Phosphoserine occurs at positions 1243 and 1464. The tract at residues 1557–1583 (SQRESLPSENKTENCRAQKRTRVEEND) is disordered. Basic and acidic residues predominate over residues 1566–1583 (NKTENCRAQKRTRVEEND). The short motif at 1577-1590 (TRVEENDVTNEKKI) is the Nuclear localization signal element. Phosphoserine occurs at positions 1616, 1627, and 1642. Positions 1763–1890 (KVKDYSDEEL…FLEVETQKTQ (128 aa)) are required for interaction with ZWINT. The stretch at 1799–1890 (VALYNKLVHS…FLEVETQKTQ (92 aa)) forms a coiled coil. Residues 1873-2093 (EEEELQRKFL…GKTGHDEIAA (221 aa)) form an interaction with NSL1, DSN1 and required for assembly into the outer kinetochore region.

As to quaternary structure, component of the KNL1 complex composed of KNL1 and ZWINT. Part of the ten-subunit outer kinetochore KMN network that includes the KNL1, MIS12 and NDC80 complexes; a bioriented kinetochore contains approximately 150 copies of the network. Interacts (via C-terminus) with the MIS12 complex subunits NSL1 (via C-terminus), PMF1 and DSN1; the interaction is direct. Interacts (via N-terminal region) with BUB1B (via BUB1 N-terminal domain); the interaction is direct and is required for cell cycle arrest upon activation of the mitotic spindle assembly checkpoint. Interacts (via N-terminal region) with BUB1 (via BUB1 N-terminal domain); the interaction is direct. Interacts with the protein phosphatase PP1 subunit PPP1CA; the interaction is direct and mutually exclusive with binding to microtubules. Interacts with the protein phosphatase PP1 subunit PPP1CC; the interaction is direct and mutually exclusive with binding to microtubules. In terms of processing, phosphorylation by AURKB negatively regulates its interaction with protein phosphatase 1 (PP1) subunit PPP1CA and with microtubules. Expressed in oocytes during meiotic progression (at protein level). Expressed during spermatogenesis.

Its subcellular location is the nucleus. The protein resides in the chromosome. It is found in the centromere. The protein localises to the kinetochore. It localises to the cytoplasm. Its function is as follows. Acts as a component of the outer kinetochore KNL1 complex that serves as a docking point for spindle assembly checkpoint components and mediates microtubule-kinetochore interactions. Kinetochores, consisting of a centromere-associated inner segment and a microtubule-contacting outer segment, play a crucial role in chromosome segregation by mediating the physical connection between centromeric DNA and spindle microtubules. The outer kinetochore is made up of the ten-subunit KMN network, comprising the MIS12, NDC80 and KNL1 complexes, and auxiliary microtubule-associated components; together they connect the outer kinetochore with the inner kinetochore, bind microtubules, and mediate interactions with mitotic checkpoint proteins that delay anaphase until chromosomes are bioriented on the spindle. Required for kinetochore binding by a distinct subset of kMAPs (kinetochore-bound microtubule-associated proteins) and motors. Acts in coordination with CENPK to recruit the NDC80 complex to the outer kinetochore. Can bind either to microtubules or to the protein phosphatase 1 (PP1) catalytic subunits PPP1CA and PPP1CC (via overlapping binding sites), it has higher affinity for PP1. Recruits MAD2L1 to the kinetochore and also directly links BUB1 and BUB1B to the kinetochore. In addition to orienting mitotic chromosomes, it is also essential for alignment of homologous chromosomes during meiotic metaphase I. In meiosis I, required to activate the spindle assembly checkpoint at unattached kinetochores to correct erroneous kinetochore-microtubule attachments. In Mus musculus (Mouse), this protein is Outer kinetochore KNL1 complex subunit KNL1.